We begin with the raw amino-acid sequence, 177 residues long: Cytidylate kinase (177 aa).

8–16 contacts ATP; that stretch reads GPPGGGKTT.

It belongs to the cytidylate kinase family. Type 2 subfamily.

The protein resides in the cytoplasm. The enzyme catalyses CMP + ATP = CDP + ADP. The catalysed reaction is dCMP + ATP = dCDP + ADP. In Staphylothermus marinus (strain ATCC 43588 / DSM 3639 / JCM 9404 / F1), this protein is Cytidylate kinase.